We begin with the raw amino-acid sequence, 151 residues long: Large ribosomal subunit protein uL13 (151 aa).

The protein belongs to the universal ribosomal protein uL13 family. Part of the 50S ribosomal subunit.

This protein is one of the early assembly proteins of the 50S ribosomal subunit, although it is not seen to bind rRNA by itself. It is important during the early stages of 50S assembly. The protein is Large ribosomal subunit protein uL13 of Synechocystis sp. (strain ATCC 27184 / PCC 6803 / Kazusa).